A 2159-amino-acid chain; its full sequence is ATP-binding cassette sub-family A member 7 (2159 aa).

Residues 22–42 traverse the membrane as a helical segment; sequence PIQLLVELLWPLFLFFILVAV. At 43–546 the chain is on the extracellular side; sequence RHSHPPLEHH…DVFLRVLSRS (504 aa). Cys75 and Cys222 form a disulfide bridge. N-linked (GlcNAc...) asparagine glycosylation occurs at Asn309. The next 6 membrane-spanning stretches (helical) occupy residues 547–567, 590–610, 623–643, 652–672, 678–698, and 732–752; these read LPLF…KAVV, LGWF…LVLV, VVIF…SFLL, LAAA…VLCV, LHLG…GFGC, and AFLL…EAVC. Positions 804–1035 constitute an ABC transporter 1 domain; it reads VSIRGLKKHF…LGCGYYLTLV (232 aa). 838–845 is an ATP binding site; it reads GHNGAGKT. The helical transmembrane segment at 846–866 threads the bilayer; the sequence is TTLSILSGLFPPSSGSASILG. Disordered regions lie at residues 1042–1088 and 1172–1192; these read VTHD…GAVP and GGDS…PTGP. A compositionally biased stretch (basic and acidic residues) spans 1044–1061; the sequence is HDAKGDSEDPRREKKSDG. The segment covering 1062-1081 has biased composition (polar residues); the sequence is NGRTSDTAFTRGTSDKSNQA. Residues 1246 to 1266 traverse the membrane as a helical segment; it reads VVLPALFVGLALFFSLIVPPF. The Extracellular portion of the chain corresponds to 1267–1551; that stretch reads GQYPPLQLSP…TLIASSVDVL (285 aa). A disulfide bridge connects residues Cys1359 and Cys1373. 5 consecutive transmembrane segments (helical) span residues 1552–1572, 1598–1618, 1635–1655, 1663–1683, and 1743–1763; these read VSIC…LVLI, FLWD…IFLA, LLLL…SFFF, VVLT…TFVL, and IIGK…LITL. One can recognise an ABC transporter 2 domain in the interval 1807–2039; that stretch reads LVLRDLTKVY…FGAGHTLTLR (233 aa). Position 1841-1848 (1841-1848) interacts with ATP; that stretch reads GVNGAGKT. The segment at 2118–2159 is disordered; that stretch reads QGEEEESSRQEAEEEEVSKPGRQHPKRVSRFLEDPSSVETMI. Residues 2119–2133 show a composition bias toward acidic residues; sequence GEEEESSRQEAEEEE.

It belongs to the ABC transporter superfamily. ABCA family. In terms of processing, N-glycosylated. Widely expressed with higher expression in brain, lung, adrenal gland, spleen and hematopoietic tissues (at protein level). In the brain, expressed in cortex, cerebellum, hippocampus, olfactory bulb, neurons, astrocytes and microglia (at protein level). Also expressed in adipocytes and macrophages (at protein level). Expressed in thymocytes (at protein level). Highly expressed in spleen and hematopoietic tissues. Expressed in brain, lung, macrophages, microglia, oligodendrocytes and neurons.

Its subcellular location is the cell membrane. The protein localises to the golgi apparatus membrane. The protein resides in the early endosome membrane. It localises to the cytoplasm. It is found in the cell projection. Its subcellular location is the ruffle membrane. The protein localises to the phagocytic cup. Its function is as follows. Probable ATP-binding cassette (ABC) transporter that plays a role in lipid homeostasis and macrophage-mediated phagocytosis. Binds APOA1 and may function in apolipoprotein-mediated phospholipid efflux from cells. May also mediate cholesterol efflux. May regulate cellular ceramide homeostasis during keratinocyte differentiation. Involved in lipid raft organization and CD1D localization on thymocytes and antigen-presenting cells, which plays an important role in natural killer T-cell development and activation. Plays a role in phagocytosis of apoptotic cells by macrophages. Macrophage phagocytosis is stimulated by APOA1 or APOA2, probably by stabilization of ABCA7. Also involved in phagocytic clearance of amyloid-beta by microglia cells and macrophages. Further limits amyloid-beta production by playing a role in the regulation of amyloid-beta A4 precursor protein (APP) endocytosis and/or processing. This chain is ATP-binding cassette sub-family A member 7 (Abca7), found in Mus musculus (Mouse).